The chain runs to 118 residues: Large ribosomal subunit protein bL20 (118 aa).

This sequence belongs to the bacterial ribosomal protein bL20 family.

Functionally, binds directly to 23S ribosomal RNA and is necessary for the in vitro assembly process of the 50S ribosomal subunit. It is not involved in the protein synthesizing functions of that subunit. The polypeptide is Large ribosomal subunit protein bL20 (Hamiltonella defensa subsp. Acyrthosiphon pisum (strain 5AT)).